The chain runs to 199 residues: Molybdenum cofactor guanylyltransferase (199 aa).

GTP-binding positions include 12–14 (LAG), lysine 25, asparagine 53, aspartate 71, and aspartate 101. Aspartate 101 lines the Mg(2+) pocket.

It belongs to the MobA family. In terms of assembly, monomer. It depends on Mg(2+) as a cofactor.

It is found in the cytoplasm. The enzyme catalyses Mo-molybdopterin + GTP + H(+) = Mo-molybdopterin guanine dinucleotide + diphosphate. Its function is as follows. Transfers a GMP moiety from GTP to Mo-molybdopterin (Mo-MPT) cofactor (Moco or molybdenum cofactor) to form Mo-molybdopterin guanine dinucleotide (Mo-MGD) cofactor. The chain is Molybdenum cofactor guanylyltransferase from Polynucleobacter asymbioticus (strain DSM 18221 / CIP 109841 / QLW-P1DMWA-1) (Polynucleobacter necessarius subsp. asymbioticus).